Here is a 429-residue protein sequence, read N- to C-terminus: Enolase (429 aa).

Gln-164 contacts (2R)-2-phosphoglycerate. The active-site Proton donor is the Glu-206. Mg(2+) is bound by residues Asp-243, Glu-286, and Asp-313. (2R)-2-phosphoglycerate is bound by residues Lys-338, Arg-367, Ser-368, and Lys-389. Residue Lys-338 is the Proton acceptor of the active site.

The protein belongs to the enolase family. Homooctamer. Forms a ring-shaped particle. Requires Mg(2+) as cofactor.

Its subcellular location is the cytoplasm. The protein localises to the secreted. The protein resides in the cell surface. The enzyme catalyses (2R)-2-phosphoglycerate = phosphoenolpyruvate + H2O. It participates in carbohydrate degradation; glycolysis; pyruvate from D-glyceraldehyde 3-phosphate: step 4/5. Its activity is regulated as follows. Inhibited by fluoride and phosphate. Functionally, catalyzes the reversible conversion of 2-phosphoglycerate (2-PG) into phosphoenolpyruvate (PEP). It is essential for the degradation of carbohydrates via glycolysis. In Thermotoga maritima (strain ATCC 43589 / DSM 3109 / JCM 10099 / NBRC 100826 / MSB8), this protein is Enolase.